Consider the following 252-residue polypeptide: Large ribosomal subunit protein uL29m (252 aa).

The transit peptide at 1 to 39 directs the protein to the mitochondrion; the sequence is MSTSTVIRPVARSLLQLRKAGNTPPAFLLPCLQSSSTTS. Positions 233 to 242 are enriched in acidic residues; it reads EDVLAEAEGE. A disordered region spans residues 233-252; that stretch reads EDVLAEAEGEAEPKPAQVTA.

This sequence belongs to the universal ribosomal protein uL29 family. In terms of assembly, component of the mitochondrial large ribosomal subunit. Mature mitochondrial ribosomes consist of a small (37S) and a large (54S) subunit. The 37S subunit contains at least 33 different proteins and 1 molecule of RNA (15S). The 54S subunit contains at least 45 different proteins and 1 molecule of RNA (21S).

The protein resides in the mitochondrion. The polypeptide is Large ribosomal subunit protein uL29m (mrpl4) (Botryotinia fuckeliana (strain B05.10) (Noble rot fungus)).